A 317-amino-acid chain; its full sequence is Transaldolase (317 aa).

Lys-126 (schiff-base intermediate with substrate) is an active-site residue.

The protein belongs to the transaldolase family. Type 1 subfamily. Homodimer.

The protein localises to the cytoplasm. The catalysed reaction is D-sedoheptulose 7-phosphate + D-glyceraldehyde 3-phosphate = D-erythrose 4-phosphate + beta-D-fructose 6-phosphate. It participates in carbohydrate degradation; pentose phosphate pathway; D-glyceraldehyde 3-phosphate and beta-D-fructose 6-phosphate from D-ribose 5-phosphate and D-xylulose 5-phosphate (non-oxidative stage): step 2/3. In terms of biological role, transaldolase is important for the balance of metabolites in the pentose-phosphate pathway. The sequence is that of Transaldolase from Paraburkholderia xenovorans (strain LB400).